The chain runs to 394 residues: Thioredoxin-interacting protein (394 aa).

Residue lysine 212 forms a Glycyl lysine isopeptide (Lys-Gly) (interchain with G-Cter in ubiquitin) linkage. Serine 361 bears the Phosphoserine mark.

It belongs to the arrestin family. As to quaternary structure, homodimer; disulfide-linked. Interacts with TXN/thioredoxin through its redox-active site. Interacts with transcriptional repressors ZBTB16, ZBTB32 and HDAC1. Interacts with DDIT4. Ubiquitinated; undergoes heterotypic 'Lys-48'-/'Lys-63'-branched polyubiquitination catalyzed by ITCH and UBR5 resulting in proteasomal degradation. Deubiquitinated by USP5, leading to TXNIP stabilization.

The protein resides in the cytoplasm. Functionally, may act as an oxidative stress mediator by inhibiting thioredoxin activity or by limiting its bioavailability. Interacts with COPS5 and restores COPS5-induced suppression of CDKN1B stability, blocking the COPS5-mediated translocation of CDKN1B from the nucleus to the cytoplasm. Functions as a transcriptional repressor, possibly by acting as a bridge molecule between transcription factors and corepressor complexes, and over-expression will induce G0/G1 cell cycle arrest. Required for the maturation of natural killer cells. Acts as a suppressor of tumor cell growth. Inhibits the proteasomal degradation of DDIT4, and thereby contributes to the inhibition of the mammalian target of rapamycin complex 1 (mTORC1). The sequence is that of Thioredoxin-interacting protein (Txnip) from Rattus norvegicus (Rat).